The chain runs to 140 residues: Nucleoside diphosphate kinase (140 aa).

K11, F59, R87, T93, R104, and N114 together coordinate ATP. H117 (pros-phosphohistidine intermediate) is an active-site residue.

The protein belongs to the NDK family. As to quaternary structure, homotetramer. Mg(2+) serves as cofactor.

It is found in the cytoplasm. It carries out the reaction a 2'-deoxyribonucleoside 5'-diphosphate + ATP = a 2'-deoxyribonucleoside 5'-triphosphate + ADP. The enzyme catalyses a ribonucleoside 5'-diphosphate + ATP = a ribonucleoside 5'-triphosphate + ADP. Major role in the synthesis of nucleoside triphosphates other than ATP. The ATP gamma phosphate is transferred to the NDP beta phosphate via a ping-pong mechanism, using a phosphorylated active-site intermediate. The sequence is that of Nucleoside diphosphate kinase from Rhodopseudomonas palustris (strain BisA53).